Here is a 545-residue protein sequence, read N- to C-terminus: Ribulokinase (545 aa).

This sequence belongs to the ribulokinase family.

It carries out the reaction D-ribulose + ATP = D-ribulose 5-phosphate + ADP + H(+). The enzyme catalyses L-ribulose + ATP = L-ribulose 5-phosphate + ADP + H(+). It functions in the pathway carbohydrate degradation; L-arabinose degradation via L-ribulose; D-xylulose 5-phosphate from L-arabinose (bacterial route): step 2/3. This Staphylococcus aureus (strain Mu3 / ATCC 700698) protein is Ribulokinase.